Consider the following 172-residue polypeptide: RNA pyrophosphohydrolase (172 aa).

Residues 6–149 (GFRANVGIII…KRDVYRKVMK (144 aa)) enclose the Nudix hydrolase domain. The Nudix box motif lies at 38-59 (GGLDDGESVEEAMYRELYEEVG).

This sequence belongs to the Nudix hydrolase family. RppH subfamily. The cofactor is a divalent metal cation.

Accelerates the degradation of transcripts by removing pyrophosphate from the 5'-end of triphosphorylated RNA, leading to a more labile monophosphorylated state that can stimulate subsequent ribonuclease cleavage. The polypeptide is RNA pyrophosphohydrolase (Shewanella frigidimarina (strain NCIMB 400)).